A 124-amino-acid polypeptide reads, in one-letter code: NADH-quinone oxidoreductase subunit A (124 aa).

The next 3 helical transmembrane spans lie at 11 to 31, 68 to 88, and 93 to 113; these read YLPI…IMIL, LVAI…PWAI, and IGKI…IGFV.

The protein belongs to the complex I subunit 3 family. In terms of assembly, NDH-1 is composed of 14 different subunits. Subunits NuoA, H, J, K, L, M, N constitute the membrane sector of the complex.

The protein resides in the cell inner membrane. It catalyses the reaction a quinone + NADH + 5 H(+)(in) = a quinol + NAD(+) + 4 H(+)(out). Functionally, NDH-1 shuttles electrons from NADH, via FMN and iron-sulfur (Fe-S) centers, to quinones in the respiratory chain. The immediate electron acceptor for the enzyme in this species is believed to be ubiquinone. Couples the redox reaction to proton translocation (for every two electrons transferred, four hydrogen ions are translocated across the cytoplasmic membrane), and thus conserves the redox energy in a proton gradient. The protein is NADH-quinone oxidoreductase subunit A of Rickettsia bellii (strain RML369-C).